A 567-amino-acid polypeptide reads, in one-letter code: D-lactate dehydrogenase [cytochrome], mitochondrial (567 aa).

The N-terminal 56 residues, 1–56, are a transit peptide targeting the mitochondrion; sequence MAFASKFARSKTILSFLRPCRQLHSTPKSTGDVTVLSPVKGRRRLPTCWSSSLFPL. The region spanning 142–319 is the FAD-binding PCMH-type domain; sequence AVNIPDVVVF…TEITLRLQKI (178 aa).

It belongs to the FAD-binding oxidoreductase/transferase type 4 family. In terms of assembly, homodimer. The cofactor is FAD. As to expression, expressed in leaves, stems, flowers and roots.

It is found in the mitochondrion. It carries out the reaction (R)-lactate + 2 Fe(III)-[cytochrome c] = 2 Fe(II)-[cytochrome c] + pyruvate + 2 H(+). With respect to regulation, inhibited by cyanide ions. Its function is as follows. Catalyzes the stereospecific oxidation of D-lactate to pyruvate. Involved in the detoxification of methylglyoxal and D-lactate, but probably not involved in the metabolization of glycolate. This chain is D-lactate dehydrogenase [cytochrome], mitochondrial, found in Arabidopsis thaliana (Mouse-ear cress).